The primary structure comprises 118 residues: Ribulose bisphosphate carboxylase small subunit (118 aa).

It belongs to the RuBisCO small chain family. Heterohexadecamer of 8 large and 8 small subunits.

In terms of biological role, ruBisCO catalyzes two reactions: the carboxylation of D-ribulose 1,5-bisphosphate, the primary event in carbon dioxide fixation, as well as the oxidative fragmentation of the pentose substrate. Both reactions occur simultaneously and in competition at the same active site. Although the small subunit is not catalytic it is essential for maximal activity. In Thiobacillus denitrificans (strain ATCC 25259 / T1), this protein is Ribulose bisphosphate carboxylase small subunit.